The chain runs to 98 residues: UPF0473 protein LAR_0522 (98 aa).

It belongs to the UPF0473 family.

In Limosilactobacillus reuteri subsp. reuteri (strain JCM 1112) (Lactobacillus reuteri), this protein is UPF0473 protein LAR_0522.